The chain runs to 688 residues: Glycine--tRNA ligase beta subunit (688 aa).

Belongs to the class-II aminoacyl-tRNA synthetase family. In terms of assembly, tetramer of two alpha and two beta subunits.

It is found in the cytoplasm. The enzyme catalyses tRNA(Gly) + glycine + ATP = glycyl-tRNA(Gly) + AMP + diphosphate. The protein is Glycine--tRNA ligase beta subunit of Vibrio atlanticus (strain LGP32) (Vibrio splendidus (strain Mel32)).